Reading from the N-terminus, the 75-residue chain is UPF0352 protein YejL (75 aa).

This sequence belongs to the UPF0352 family.

In Shigella sonnei (strain Ss046), this protein is UPF0352 protein YejL.